The following is a 41-amino-acid chain: uncharacterized protein (41 aa).

The chain crosses the membrane as a helical span at residues 8 to 28 (IKKIAMFFLGILVGVFIVLFF).

The protein localises to the membrane. This is an uncharacterized protein from Streptococcus pneumoniae serotype 2 (strain D39 / NCTC 7466).